Reading from the N-terminus, the 257-residue chain is MSASRLERRIREAQAAGRPALIPFLTAGFPTKERFWDELEALDAAGADIIEVGVPFSDPVADGPVVAAASQRALESGVTLRWIMDGLAARKGRLRAGLVLMGYLNPFMQYGFERFVSDAADAGVAGCIIPDLPLDEDADLRALLAARDMDLIALVGPNTGEGRMREYAAVASGYVYVVSVMGTTGVRDGLPVEVADTLARARQCFSIPVALGFGISRPAQLEGLSHPPDAVIFGSALLRHLDAGGDAASFMKAWAER.

Catalysis depends on proton acceptor residues E51 and D62.

This sequence belongs to the TrpA family. As to quaternary structure, tetramer of two alpha and two beta chains.

It catalyses the reaction (1S,2R)-1-C-(indol-3-yl)glycerol 3-phosphate + L-serine = D-glyceraldehyde 3-phosphate + L-tryptophan + H2O. It functions in the pathway amino-acid biosynthesis; L-tryptophan biosynthesis; L-tryptophan from chorismate: step 5/5. Functionally, the alpha subunit is responsible for the aldol cleavage of indoleglycerol phosphate to indole and glyceraldehyde 3-phosphate. This is Tryptophan synthase alpha chain from Nitratidesulfovibrio vulgaris (strain ATCC 29579 / DSM 644 / CCUG 34227 / NCIMB 8303 / VKM B-1760 / Hildenborough) (Desulfovibrio vulgaris).